A 311-amino-acid polypeptide reads, in one-letter code: MPQHLVPHTGTGKRTTIEDFEIGRFLGRGKYGLVYLAREQSSKLVVALKVLYKSYIKSERVEGQVRRELDIHLNVRHINIIRLYTWFQDETRVFLVLEVAPYGELYQRLQQFGKFPLPVVSKIIRDVAQAIQYLHRKNIFHRDLKAENILICKGKETKEHTDAHNSDDSISVHEHELVRMAHYTYKIADFGWSVHHPTHGGRRRTQCGTLDYLPPEVMLGQSYDKACDIWSLGALCYELICGTAPFYHDEIKITRQNIANVEYSFTKDFSPASKDFIQRMLIRSPEARISIEDILRHPFLRQTDHRSKVPK.

The Protein kinase domain maps to 20-300 (FEIGRFLGRG…IEDILRHPFL (281 aa)). Position 49 (Lys49) interacts with ATP. Residue Asp143 is the Proton acceptor of the active site. The interval 189 to 216 (DFGWSVHHPTHGGRRRTQCGTLDYLPPE) is activation loop. Phosphothreonine; by autocatalysis is present on Thr205. The Destruction (D)-box signature appears at 280–299 (MLIRSPEARISIEDILRHPF).

It belongs to the protein kinase superfamily. Ser/Thr protein kinase family. Aurora subfamily. Interacts with EB1 (via C-terminal residues 101-238). In terms of processing, phosphorylated in mitosis and cytokinesis. Activated by autophosphorylation at Thr-205.

It is found in the nucleus. The protein resides in the cytoplasm. Its subcellular location is the cytoskeleton. The protein localises to the microtubule organizing center. It localises to the centrosome. It is found in the spindle. The protein resides in the spindle pole. Its subcellular location is the nucleus membrane. It carries out the reaction L-seryl-[protein] + ATP = O-phospho-L-seryl-[protein] + ADP + H(+). The catalysed reaction is L-threonyl-[protein] + ATP = O-phospho-L-threonyl-[protein] + ADP + H(+). With respect to regulation, activated by cell-cycle phase specific phosphorylation. Inhibited by ATP-competitive inhibitors N-[4-[[6-Methoxy-7-[3-(4-morpholinyl)propoxy]-4-quinazolinyl]amino]phenyl]benzamide (ZM447439) and cyclopropanecarboxylic acid-(3-(4-(3-trifluoromethylphenylamino)-pyrimidin-2-ylamino)-phenyl)-amide (CFPPA). Inhibition leads to reduced growth, increased cytokinesis, microtubular defects, and increased ploidy of the cells. Involved in regulation of the cell cycle. Required for mitotic cell division and cytokinesis. Based on its localization to centrosomes and spindle microtubules, as well as to various cytoskeletal components such as the median body, parental attachment disk, and anterior and posterior-lateral paraflagellar dense rods, may coordinate reorganization and segregation of tubulin-containing structures during mitosis and cytokinesis. May regulate microtubule disassembly by phosphorylating cytoskeletal proteins leading to their destabilization. Phosphorylates EB1 at 'Ser-148' in vitro. Phosphorylates histone H3 in vitro. This chain is Aurora kinase, found in Giardia intestinalis (strain ATCC 50803 / WB clone C6) (Giardia lamblia).